A 274-amino-acid polypeptide reads, in one-letter code: Cell division protein FtsQ (274 aa).

The tract at residues 1-24 (MRDLHAKKQRVPHNRVKKPPKERK) is disordered. The Cytoplasmic segment spans residues 1–33 (MRDLHAKKQRVPHNRVKKPPKERKPINWGPILK). Basic residues predominate over residues 7-21 (KKQRVPHNRVKKPPK). The chain crosses the membrane as a helical span at residues 34–56 (FASRGFGGAALCAGLGFGGWQLY). The Periplasmic portion of the chain corresponds to 57 to 274 (NLVSRTTLLR…YADKIIVKKV (218 aa)). One can recognise a POTRA domain in the interval 65–133 (LRLEAIEVSP…HTLSITVSER (69 aa)).

It belongs to the FtsQ/DivIB family. FtsQ subfamily.

The protein resides in the cell inner membrane. Essential cell division protein. This Geobacter sp. (strain M21) protein is Cell division protein FtsQ.